The following is a 179-amino-acid chain: Interleukin-10 (179 aa).

The N-terminal stretch at 1–19 (MPSSSALLCCLVFLAGVAA) is a signal peptide. Cystine bridges form between cysteine 31-cysteine 127 and cysteine 81-cysteine 133. N-linked (GlcNAc...) asparagine glycosylation is present at asparagine 135.

It belongs to the IL-10 family. In terms of assembly, homodimer. Interacts with IL10RA and IL10RB.

It localises to the secreted. Its function is as follows. Major immune regulatory cytokine that acts on many cells of the immune system where it has profound anti-inflammatory functions, limiting excessive tissue disruption caused by inflammation. Mechanistically, IL10 binds to its heterotetrameric receptor comprising IL10RA and IL10RB leading to JAK1 and STAT2-mediated phosphorylation of STAT3. In turn, STAT3 translocates to the nucleus where it drives expression of anti-inflammatory mediators. Targets antigen-presenting cells (APCs) such as macrophages and monocytes and inhibits their release of pro-inflammatory cytokines including granulocyte-macrophage colony-stimulating factor /GM-CSF, granulocyte colony-stimulating factor/G-CSF, IL-1 alpha, IL-1 beta, IL-6, IL-8 and TNF-alpha. Also interferes with antigen presentation by reducing the expression of MHC-class II and co-stimulatory molecules, thereby inhibiting their ability to induce T cell activation. In addition, controls the inflammatory response of macrophages by reprogramming essential metabolic pathways including mTOR signaling. This Cervus elaphus (Red deer) protein is Interleukin-10 (IL10).